The chain runs to 497 residues: Probable cytosol aminopeptidase (497 aa).

Residues Lys265 and Asp270 each coordinate Mn(2+). Lys277 is a catalytic residue. The Mn(2+) site is built by Asp288, Asp347, and Glu349. Arg351 is an active-site residue.

Belongs to the peptidase M17 family. The cofactor is Mn(2+).

Its subcellular location is the cytoplasm. The catalysed reaction is Release of an N-terminal amino acid, Xaa-|-Yaa-, in which Xaa is preferably Leu, but may be other amino acids including Pro although not Arg or Lys, and Yaa may be Pro. Amino acid amides and methyl esters are also readily hydrolyzed, but rates on arylamides are exceedingly low.. It catalyses the reaction Release of an N-terminal amino acid, preferentially leucine, but not glutamic or aspartic acids.. In terms of biological role, presumably involved in the processing and regular turnover of intracellular proteins. Catalyzes the removal of unsubstituted N-terminal amino acids from various peptides. The chain is Probable cytosol aminopeptidase from Geobacillus sp. (strain WCH70).